The following is a 611-amino-acid chain: Depudecin biosynthesis cluster-specific transcription activator DEP6 (611 aa).

A DNA-binding region (zn(2)-C6 fungal-type) is located at residues 17 to 44 (CEICRQRKVRCDRALPRCRRCERLNQAC). Residues 76-125 (DAPRGPASSMSSQSRSDSAAPAASRVPSVSASVPNSAATNPMDMVGTRSS) form a disordered region. The span at 78–113 (PRGPASSMSSQSRSDSAAPAASRVPSVSASVPNSAA) shows a compositional bias: low complexity.

Its subcellular location is the nucleus. Functionally, transcription factor that positively regulates the expression of the gene cluster that mediates the biosynthesis of depudecin, a highly oxidized eleven-carbon linear polyketide that acts as a histone deacetylase (HDAC) inhibitor and makes a small contribution to pathogenesis. This chain is Depudecin biosynthesis cluster-specific transcription activator DEP6, found in Fusarium langsethiae.